Reading from the N-terminus, the 306-residue chain is Low-density lipoprotein receptor class A domain-containing protein 4 (306 aa).

The Lumenal portion of the chain corresponds to 1 to 64 (MPEAGFQATN…PPGIFNSELE (64 aa)). One can recognise an LDL-receptor class A domain in the interval 16–48 (KFTCTSGKCLYLGSLVCNQQNDCGDNSDEENCL). Cystine bridges form between Cys-19–Cys-38 and Cys-32–Cys-47. The helical transmembrane segment at 65 to 85 (FAQIIIIVVVVTVMVVVIVCL) threads the bilayer. Topologically, residues 86-306 (LNHYKVSTRS…GKDRKPGNLV (221 aa)) are cytoplasmic. Positions 180 to 183 (PPPY) match the PPxY motif 1 motif. An SMAD interaction motif (SIM) motif is present at residues 208–211 (PPNR). The short motif at 252–255 (PPTY) is the PPxY motif 2 element. The segment at 286–306 (NNAESTIVPIKGKDRKPGNLV) is disordered. Residues 296-306 (KGKDRKPGNLV) show a composition bias toward basic and acidic residues.

Belongs to the PMEPA1 family. As to quaternary structure, interacts with PMEPA1. Interacts (via the SMAD interaction motif) with SMAD2 and SMAD3. As to expression, expressed in lymphocytes.

The protein resides in the early endosome membrane. Functions as a negative regulator of TGF-beta signaling and thereby probably plays a role in cell proliferation, differentiation, apoptosis, motility, extracellular matrix production and immunosuppression. In the canonical TGF-beta pathway, ZFYVE9/SARA recruits the intracellular signal transducer and transcriptional modulators SMAD2 and SMAD3 to the TGF-beta receptor. Phosphorylated by the receptor, SMAD2 and SMAD3 then form a heteromeric complex with SMAD4 that translocates to the nucleus to regulate transcription. Through interaction with SMAD2 and SMAD3, LDLRAD4 may compete with ZFYVE9 and SMAD4 and prevent propagation of the intracellular signal. This chain is Low-density lipoprotein receptor class A domain-containing protein 4 (LDLRAD4), found in Homo sapiens (Human).